The following is a 382-amino-acid chain: MSVQGFWGLQLVPGKTYSQVVSAPFRITMASLAADAEAGKRTSVSVLVDEKEFVLCTLVPNKIEQQPLDITFVEGEEVTFSAKGQNNIHLTGNYVFQDDEDDEMGASMIDSDEEDNVEDFLKKLPPNASKEDINKALLGLEVDEEIESDEEVESDEEIESDEEIESEEEEEEPVPVSKKRPAEEVKEIASKKQKAEKKEQPKKEKSKKEEPKKEEPKKEQPKKEEPKKKEEPKKKEEPKKKEEPKKKEEPKKKEEPKKKEEPKKKEEPKKKITKLPNGLIIEDIKMGEGASCKNGQRVGMRYIGKLTNGKVFDKNVSGKPFSFLLGRGEVIKGWDLGIAGMKAGGERKLTIPAPLAYGKRGAPPDIPKNATLVFDVKLLSMK.

The disordered stretch occupies residues 139 to 274 (GLEVDEEIES…KEEPKKKITK (136 aa)). Residues 141 to 173 (EVDEEIESDEEVESDEEIESDEEIESEEEEEEP) are compositionally biased toward acidic residues. Basic and acidic residues-rich tracts occupy residues 180 to 190 (RPAEEVKEIAS) and 196 to 270 (EKKE…EPKK). A PPIase FKBP-type domain is found at 295–382 (GQRVGMRYIG…VFDVKLLSMK (88 aa)).

Belongs to the FKBP-type PPIase family. FKBP3/4 subfamily. In terms of assembly, binds to histones H3 and H4.

The protein localises to the nucleus. It carries out the reaction [protein]-peptidylproline (omega=180) = [protein]-peptidylproline (omega=0). With respect to regulation, inhibited by both FK506 and rapamycin. In terms of biological role, PPIase that acts as a histone chaperone. Histone proline isomerase that increases the rate of cis-trans isomerization at prolines on the histone H3 N-terminal tail. Proline isomerization influences H3 methylation thereby regulating gene expression. The chain is FK506-binding protein 4 (FKBP4) from Rhizopus delemar (strain RA 99-880 / ATCC MYA-4621 / FGSC 9543 / NRRL 43880) (Mucormycosis agent).